The chain runs to 427 residues: L-cysteine:1D-myo-inositol 2-amino-2-deoxy-alpha-D-glucopyranoside ligase (427 aa).

C46 is a Zn(2+) binding site. L-cysteinyl-5'-AMP is bound by residues 46 to 49 (CGIT), T61, and 84 to 86 (NVT). The 'HIGH' region motif lies at 48–58 (ITPYDATHMGH). A 'ERGGDP' region motif is present at residues 186–191 (ERGGDP). Position 233 (W233) interacts with L-cysteinyl-5'-AMP. Zn(2+) is bound at residue C237. 255-257 (GSD) serves as a coordination point for L-cysteinyl-5'-AMP. H262 serves as a coordination point for Zn(2+). V289 contributes to the L-cysteinyl-5'-AMP binding site. Residues 295-299 (KMSKS) carry the 'KMSKS' region motif.

The protein belongs to the class-I aminoacyl-tRNA synthetase family. MshC subfamily. As to quaternary structure, monomer. Requires Zn(2+) as cofactor.

The enzyme catalyses 1D-myo-inositol 2-amino-2-deoxy-alpha-D-glucopyranoside + L-cysteine + ATP = 1D-myo-inositol 2-(L-cysteinylamino)-2-deoxy-alpha-D-glucopyranoside + AMP + diphosphate + H(+). Catalyzes the ATP-dependent condensation of GlcN-Ins and L-cysteine to form L-Cys-GlcN-Ins. The chain is L-cysteine:1D-myo-inositol 2-amino-2-deoxy-alpha-D-glucopyranoside ligase from Catenulispora acidiphila (strain DSM 44928 / JCM 14897 / NBRC 102108 / NRRL B-24433 / ID139908).